The following is a 275-amino-acid chain: Arylalkylamine N-acetyltransferase 1 (275 aa).

Residues 181 to 183 (LSV) and 189 to 193 (GLGIA) each bind acetyl-CoA. In terms of domain architecture, N-acetyltransferase spans 181 to 254 (LSVDTNYRGL…GEVVFKPAAP (74 aa)).

This sequence belongs to the acetyltransferase family. AANAT subfamily. In terms of tissue distribution, in the adult, expressed in the midgut portion of the thoracic segments and the frontal half of the abdomen (at protein level). Expressed in the epithelial cell layer facing the lumen of the gut (at protein level). In the brain, expressed in a sub-populations of neurons and astrocytes, and in a set of distinct stripes in the optic lobes (at protein level). Expressed mainly in serotonergic neurons but also in subsets of glutamatergic, GABAergic and cholinergic neurons (at protein level).

The protein localises to the cytoplasm. The protein resides in the nucleus. The catalysed reaction is a 2-arylethylamine + acetyl-CoA = an N-acetyl-2-arylethylamine + CoA + H(+). The enzyme catalyses serotonin + acetyl-CoA = N-acetylserotonin + CoA + H(+). It catalyses the reaction dopamine + acetyl-CoA = N-acetyldopamine + CoA + H(+). It carries out the reaction tyramine + acetyl-CoA = N-acetyltyramine + CoA + H(+). The catalysed reaction is octopamine + acetyl-CoA = N-acetyloctopamine + CoA + H(+). The enzyme catalyses 5-methoxytryptamine + acetyl-CoA = melatonin + CoA + H(+). It catalyses the reaction 2-phenylethylamine + acetyl-CoA = N-(2-phenylethyl)acetamide + CoA + H(+). It carries out the reaction noradrenaline + acetyl-CoA = N-acetylnoradrenaline + CoA + H(+). The catalysed reaction is tyramine + butanoyl-CoA = N-butanoyltyramine + CoA + H(+). The enzyme catalyses tyramine + hexanoyl-CoA = N-hexanoyltyramine + CoA + H(+). It catalyses the reaction tryptamine + acetyl-CoA = N-acetyltryptamine + CoA + H(+). It carries out the reaction dopamine + hexadecanoyl-CoA = N-hexadecanoyl-dopamine + CoA + H(+). The catalysed reaction is dopamine + (9Z)-octadecenoyl-CoA = N-(9Z-octadecanoyl)-dopamine + CoA + H(+). The enzyme catalyses serotonin + hexadecanoyl-CoA = N-hexadecanoyl-serotonin + CoA + H(+). It catalyses the reaction serotonin + (9Z)-octadecenoyl-CoA = N-(9Z-octadecenoyl)-serotonin + CoA + H(+). It carries out the reaction serotonin + octadecanoyl-CoA = N-octadecanoyl-serotonin + CoA + H(+). The catalysed reaction is serotonin + (5Z,8Z,11Z,14Z)-eicosatetraenoyl-CoA = N-[(5Z,8Z,11Z,14Z)-eicosatetraenoyl]-serotonin + CoA + H(+). It functions in the pathway aromatic compound metabolism; melatonin biosynthesis; melatonin from serotonin: step 1/2. Inhibited by long-chain acyl-CoA thioesters, oleoyl-CoA (an analog of acetyl-CoA) and tyrosol (an analog of tyramine). In terms of biological role, catalyzes N-acetylation of tryptamine, tyramine, dopamine, serotonin and octopamine. In astrocytes, regulates sleep homeostasis by limiting the accumulation of serotonin and dopamine in the brain upon sleep deprivation. Is not essential for sclerotization. This Drosophila melanogaster (Fruit fly) protein is Arylalkylamine N-acetyltransferase 1.